The sequence spans 172 residues: Adenine phosphoribosyltransferase (172 aa).

This sequence belongs to the purine/pyrimidine phosphoribosyltransferase family. In terms of assembly, homodimer.

It localises to the cytoplasm. It catalyses the reaction AMP + diphosphate = 5-phospho-alpha-D-ribose 1-diphosphate + adenine. Its pathway is purine metabolism; AMP biosynthesis via salvage pathway; AMP from adenine: step 1/1. Functionally, catalyzes a salvage reaction resulting in the formation of AMP, that is energically less costly than de novo synthesis. The protein is Adenine phosphoribosyltransferase of Crocosphaera subtropica (strain ATCC 51142 / BH68) (Cyanothece sp. (strain ATCC 51142)).